The chain runs to 156 residues: Small ribosomal subunit protein uS7 (156 aa).

It belongs to the universal ribosomal protein uS7 family. As to quaternary structure, part of the 30S ribosomal subunit. Contacts proteins S9 and S11.

In terms of biological role, one of the primary rRNA binding proteins, it binds directly to 16S rRNA where it nucleates assembly of the head domain of the 30S subunit. Is located at the subunit interface close to the decoding center, probably blocks exit of the E-site tRNA. This is Small ribosomal subunit protein uS7 from Sphingopyxis alaskensis (strain DSM 13593 / LMG 18877 / RB2256) (Sphingomonas alaskensis).